The chain runs to 85 residues: uncharacterized protein (85 aa).

This is an uncharacterized protein from Methanocaldococcus jannaschii (strain ATCC 43067 / DSM 2661 / JAL-1 / JCM 10045 / NBRC 100440) (Methanococcus jannaschii).